A 621-amino-acid chain; its full sequence is Probable serine/threonine-protein kinase WNK2 (621 aa).

The Protein kinase domain maps to 28 to 286; that stretch reads GRYTEVLGKG…AQELLMDPFL (259 aa). Residues 108 to 111 and Lys158 contribute to the ATP site; that span reads TEVF. Asp175 serves as the catalytic Proton acceptor. Disordered regions lie at residues 438–490, 501–520, 527–553, and 600–621; these read SVEN…SDSP, VEPHIGGNMPNGILKKNDTD, GTSVDLPNPSMIDRKSGVASVSTSPQS, and HREETLTRCRLKADERNRSDKP.

Belongs to the protein kinase superfamily. Ser/Thr protein kinase family. WNK subfamily.

It catalyses the reaction L-seryl-[protein] + ATP = O-phospho-L-seryl-[protein] + ADP + H(+). It carries out the reaction L-threonyl-[protein] + ATP = O-phospho-L-threonyl-[protein] + ADP + H(+). In Oryza sativa subsp. japonica (Rice), this protein is Probable serine/threonine-protein kinase WNK2 (WNK2).